The primary structure comprises 60 residues: DNA gyrase inhibitor YacG (60 aa).

Positions 15, 18, 30, and 34 each coordinate Zn(2+).

Belongs to the DNA gyrase inhibitor YacG family. In terms of assembly, interacts with GyrB. The cofactor is Zn(2+).

Inhibits all the catalytic activities of DNA gyrase by preventing its interaction with DNA. Acts by binding directly to the C-terminal domain of GyrB, which probably disrupts DNA binding by the gyrase. In Bradyrhizobium diazoefficiens (strain JCM 10833 / BCRC 13528 / IAM 13628 / NBRC 14792 / USDA 110), this protein is DNA gyrase inhibitor YacG.